Here is a 310-residue protein sequence, read N- to C-terminus: Retrotransposon Gag-like protein 4 (310 aa).

A CCHC-type zinc finger spans residues 278–295 (QLCLYCSQSGHFTRDCLA).

Its function is as follows. Involved in cognitive function in the brain, possibly via the noradrenergic system. In Homo sapiens (Human), this protein is Retrotransposon Gag-like protein 4.